A 164-amino-acid chain; its full sequence is C-phycoerythrin alpha chain (164 aa).

2 residues coordinate (2R,3E)-phycoerythrobilin: Cys82 and Cys139.

Belongs to the phycobiliprotein family. In terms of assembly, heterodimer of an alpha and a beta chain. In terms of processing, contains two covalently linked bilin chromophores.

It localises to the cellular thylakoid membrane. Light-harvesting photosynthetic bile pigment-protein from the phycobiliprotein complex. The sequence is that of C-phycoerythrin alpha chain (cpeA) from Pseudanabaena tenuis (strain PCC 7409).